We begin with the raw amino-acid sequence, 208 residues long: Cell death-inducing p53-target protein 1 (208 aa).

2 stretches are compositionally biased toward pro residues: residues 1-13 (MSSEPPPPYPGGP) and 36-67 (MQPPPGMPLPPADIGPPPYEPPGHPMPQPGFI). The tract at residues 1–71 (MSSEPPPPYP…PQPGFIPPHM (71 aa)) is disordered. Residues 122–206 (ATTVTVLQGE…CKAYIYTYKR (85 aa)) form the LITAF domain. Residues Cys142 and Cys145 each coordinate Zn(2+). Residues 164-184 (LGFFCCFMGCDLGCCLIPCLI) form a membrane-binding amphipathic helix region. Positions 194 and 197 each coordinate Zn(2+).

It belongs to the CDIP1/LITAF family. As to expression, highly expressed in brain. Expressed at lower level in heart, skeletal muscle, kidney, pancreas and liver. Weakly or not expressed in placenta and lung.

The protein localises to the late endosome membrane. The protein resides in the lysosome membrane. Acts as an important p53/TP53-apoptotic effector. Regulates TNF-alpha-mediated apoptosis in a p53/TP53-dependent manner. This is Cell death-inducing p53-target protein 1 (CDIP1) from Homo sapiens (Human).